We begin with the raw amino-acid sequence, 266 residues long: Glucosamine-6-phosphate deaminase (266 aa).

The active-site Proton acceptor; for enolization step is the D72. D141 (for ring-opening step) is an active-site residue. The active-site Proton acceptor; for ring-opening step is the H143. Catalysis depends on E148, which acts as the For ring-opening step.

This sequence belongs to the glucosamine/galactosamine-6-phosphate isomerase family. NagB subfamily. Homohexamer.

It carries out the reaction alpha-D-glucosamine 6-phosphate + H2O = beta-D-fructose 6-phosphate + NH4(+). It participates in amino-sugar metabolism; N-acetylneuraminate degradation; D-fructose 6-phosphate from N-acetylneuraminate: step 5/5. With respect to regulation, allosterically activated by N-acetylglucosamine 6-phosphate (GlcNAc6P). Catalyzes the reversible isomerization-deamination of glucosamine 6-phosphate (GlcN6P) to form fructose 6-phosphate (Fru6P) and ammonium ion. This Salmonella typhi protein is Glucosamine-6-phosphate deaminase.